The sequence spans 123 residues: Acidic phospholipase A2 (123 aa).

7 disulfide bridges follow: cysteine 26–cysteine 116, cysteine 28–cysteine 44, cysteine 43–cysteine 95, cysteine 49–cysteine 123, cysteine 50–cysteine 88, cysteine 57–cysteine 81, and cysteine 75–cysteine 86. Ca(2+) contacts are provided by tyrosine 27, glycine 29, and glycine 31. Histidine 47 is an active-site residue. Aspartate 48 lines the Ca(2+) pocket. The active site involves aspartate 89.

This sequence belongs to the phospholipase A2 family. Group II subfamily. D49 sub-subfamily. In terms of assembly, homodimer. The cofactor is Ca(2+). In terms of tissue distribution, expressed by the venom gland.

The protein resides in the secreted. The enzyme catalyses a 1,2-diacyl-sn-glycero-3-phosphocholine + H2O = a 1-acyl-sn-glycero-3-phosphocholine + a fatty acid + H(+). Its function is as follows. Snake venom phospholipase A2 (PLA2) that inhibits ADP-induced platelet aggregation. PLA2 catalyzes the calcium-dependent hydrolysis of the 2-acyl groups in 3-sn-phosphoglycerides. This Deinagkistrodon acutus (Hundred-pace snake) protein is Acidic phospholipase A2.